The sequence spans 508 residues: Maturase K (508 aa).

This sequence belongs to the intron maturase 2 family. MatK subfamily.

It is found in the plastid. It localises to the chloroplast. Its function is as follows. Usually encoded in the trnK tRNA gene intron. Probably assists in splicing its own and other chloroplast group II introns. The sequence is that of Maturase K from Abrus precatorius (Indian licorice).